The primary structure comprises 1793 residues: Protein TIC 214 (1793 aa).

6 consecutive transmembrane segments (helical) span residues 11–31, 64–84, 90–112, 129–149, 172–192, and 222–242; these read LVSL…YYGF, FITG…HIAL, ITVI…NFLN, IFFQ…SSIL, VGWL…LVWI, and IFLI…PPIY. Residues 1504–1524 are disordered; sequence DIEEDYGESDSKKGGKDKNKK.

This sequence belongs to the TIC214 family. Part of the Tic complex.

It localises to the plastid. The protein resides in the chloroplast inner membrane. Functionally, involved in protein precursor import into chloroplasts. May be part of an intermediate translocation complex acting as a protein-conducting channel at the inner envelope. The protein is Protein TIC 214 of Lotus japonicus (Lotus corniculatus var. japonicus).